Consider the following 161-residue polypeptide: Vitamin K-dependent protein C (161 aa).

The Peptidase S1 domain occupies 1 to 161 (EKWELDLDIE…GCGLLHNYGV (161 aa)). N-linked (GlcNAc...) asparagine glycosylation occurs at Asn17. Catalysis depends on Asp26, which acts as the Charge relay system. A glycan (N-linked (GlcNAc...) asparagine) is linked at Asn82. Cystine bridges form between Cys100-Cys114 and Cys125-Cys153. Residue Ser129 is the Charge relay system of the active site.

The protein belongs to the peptidase S1 family. As to expression, plasma; synthesized in the liver.

It localises to the secreted. The protein resides in the golgi apparatus. It is found in the endoplasmic reticulum. The catalysed reaction is Degradation of blood coagulation factors Va and VIIIa.. Its function is as follows. Protein C is a vitamin K-dependent serine protease that regulates blood coagulation by inactivating factors Va and VIIIa in the presence of calcium ions and phospholipids. Exerts a protective effect on the endothelial cell barrier function. The chain is Vitamin K-dependent protein C (PROC) from Macaca mulatta (Rhesus macaque).